The sequence spans 322 residues: uncharacterized protein (322 aa).

Residues Gln-205–Gln-286 adopt a coiled-coil conformation. Composition is skewed to basic and acidic residues over residues Glu-254–Ile-281 and Asp-290–Arg-299. The tract at residues Glu-254–Phe-322 is disordered. The segment covering Ser-310–Phe-322 has biased composition (polar residues).

This sequence to B.subtilis XkdF.

This is an uncharacterized protein from Bacillus subtilis (strain 168).